Here is a 60-residue protein sequence, read N- to C-terminus: Large ribosomal subunit protein uL30 (60 aa).

Belongs to the universal ribosomal protein uL30 family. Part of the 50S ribosomal subunit.

The sequence is that of Large ribosomal subunit protein uL30 from Histophilus somni (strain 2336) (Haemophilus somnus).